We begin with the raw amino-acid sequence, 402 residues long: Phosphoglycerate kinase (402 aa).

Substrate contacts are provided by residues 24 to 26 (DFN), Arg40, 63 to 66 (HFGR), Arg122, and Arg155. Residues Lys206, Gly297, Glu328, and 357–360 (GGDS) contribute to the ATP site.

The protein belongs to the phosphoglycerate kinase family. Monomer.

It is found in the cytoplasm. The catalysed reaction is (2R)-3-phosphoglycerate + ATP = (2R)-3-phospho-glyceroyl phosphate + ADP. It participates in carbohydrate degradation; glycolysis; pyruvate from D-glyceraldehyde 3-phosphate: step 2/5. The protein is Phosphoglycerate kinase of Synechococcus sp. (strain WH7803).